The following is a 341-amino-acid chain: Adenosine deaminase (341 aa).

Residues histidine 15 and histidine 17 each contribute to the Zn(2+) site. Substrate contacts are provided by histidine 17, aspartate 19, and glycine 172. Zn(2+) is bound at residue histidine 199. Glutamate 202 (proton donor) is an active-site residue. Aspartate 279 is a Zn(2+) binding site.

This sequence belongs to the metallo-dependent hydrolases superfamily. Adenosine and AMP deaminases family. Adenosine deaminase subfamily. Requires Zn(2+) as cofactor.

It catalyses the reaction adenosine + H2O + H(+) = inosine + NH4(+). It carries out the reaction 2'-deoxyadenosine + H2O + H(+) = 2'-deoxyinosine + NH4(+). Its function is as follows. Catalyzes the hydrolytic deamination of adenosine and 2-deoxyadenosine. This Streptococcus equi subsp. zooepidemicus (strain MGCS10565) protein is Adenosine deaminase.